The sequence spans 1031 residues: MGRESRHYRKRSASRGRSGSRSRSRSPSDKRSKRGDDRRSRSRDRDRRRERSRSRDKRRSRSRDRKRLRRSRSRERDRSRERRRSRSRDRRRSRSRSRGRRSRSSSPGNKSKKTENRSRSKEKTDGGESSKEKKKDKDDKEDEKEKDAGNFDQNKLEEEMRKRKERVEKWREEQRKKAMENIGELKKEIEEMKQGKKWSLEDDDDDEDDPAEAEKEGNEMEGEELDPLDAYMEEVKEEVKKFNMRSVKGGGGNEKKSGPTVTKVVTVVTTKKAVVDSDKKKGELMENDQDAMEYSSEEEEVDLQTALTGYQTKQRKLLEPVDHGKIEYEPFRKNFYVEVPELAKMSQEEVNVFRLEMEGITVKGKGCPKPIKSWVQCGISMKILNSLKKHGYEKPTPIQTQAIPAIMSGRDLIGIAKTGSGKTIAFLLPMFRHIMDQRSLEEGEGPIAVIMTPTRELALQITKECKKFSKTLGLRVVCVYGGTGISEQIAELKRGAEIIVCTPGRMIDMLAANSGRVTNLRRVTYVVLDEADRMFDMGFEPQVMRIVDNVRPDRQTVMFSATFPRAMEALARRILSKPIEVQVGGRSVVCSDVEQQVIVIEEEKKFLKLLELLGHYQESGSVIIFVDKQEHADGLLKDLMRASYPCMSLHGGIDQYDRDSIINDFKNGTCKLLVATSVAARGLDVKHLILVVNYSCPNHYEDYVHRAGRTGRAGNKGYAYTFITEDQARYAGDIIKALELSGTAVPPDLEKLWSDFKDQQKAEGKIIKKSSGFSGKGFKFDETEQALANERKKLQKAALGLQDSDDEDAAVDIDEQIESMFNSKKRVKDMAAPGTSSVPAPTAGNAEKLEIAKRLALRINAQKNLGIESQDVMQQATNAILRGGTILAPTVSAKTIAEQLAEKINAKLNYVPLEKQEEERQDGGQNESFKRYEEELEINDFPQTARWKVTSKEALQRISEYSEAAITIRGTYFPPGKEPKEGERKIYLAIESANELAVQKAKAEITRLIKEELIRLQNSYQPTNKGRYKVL.

Over residues 1–24 (MGRESRHYRKRSASRGRSGSRSRS) the composition is skewed to basic residues. Residues 1 to 228 (MGRESRHYRK…EMEGEELDPL (228 aa)) are disordered. The N-myristoyl glycine moiety is linked to residue Gly2. A compositionally biased stretch (basic and acidic residues) spans 26–49 (SPSDKRSKRGDDRRSRSRDRDRRR). Composition is skewed to basic residues over residues 50-73 (ERSR…RSRS) and 81-103 (ERRR…RRSR). Over residues 112–200 (KKTENRSRSK…EMKQGKKWSL (89 aa)) the composition is skewed to basic and acidic residues. Positions 152–197 (DQNKLEEEMRKRKERVEKWREEQRKKAMENIGELKKEIEEMKQGKK) form a coiled coil. Residue Lys186 forms a Glycyl lysine isopeptide (Lys-Gly) (interchain with G-Cter in SUMO2) linkage. Ser199 carries the post-translational modification Phosphoserine. 2 stretches are compositionally biased toward acidic residues: residues 201–211 (EDDDDDEDDPA) and 219–228 (EMEGEELDPL). Position 263 is an N6-acetyllysine (Lys263). Tyr294 bears the Phosphotyrosine mark. Residues Ser295 and Ser296 each carry the phosphoserine modification. A Glycyl lysine isopeptide (Lys-Gly) (interchain with G-Cter in SUMO2) cross-link involves residue Lys325. Ser346 carries the phosphoserine modification. Positions 372–400 (KSWVQCGISMKILNSLKKHGYEKPTPIQT) match the Q motif motif. Residues 403 to 581 (IPAIMSGRDL…RRILSKPIEV (179 aa)) form the Helicase ATP-binding domain. 416-423 (AKTGSGKT) contributes to the ATP binding site. Positions 529–532 (DEAD) match the DEAD box motif. The Helicase C-terminal domain maps to 592–753 (DVEQQVIVIE…AVPPDLEKLW (162 aa)). An N6-acetyllysine modification is found at Lys776. Lys779 participates in a covalent cross-link: Glycyl lysine isopeptide (Lys-Gly) (interchain with G-Cter in SUMO2). Ser804 is subject to Phosphoserine. At Lys903 the chain carries N6-acetyllysine. Residues Lys907 and Lys915 each participate in a glycyl lysine isopeptide (Lys-Gly) (interchain with G-Cter in SUMO2) cross-link. Residue Ser928 is modified to Phosphoserine.

It belongs to the DEAD box helicase family. DDX46/PRP5 subfamily. Component of the 17S U2 SnRNP complex, a ribonucleoprotein complex that contains small nuclear RNA (snRNA) U2 and a number of specific proteins. Within the 17S U2 SnRNP complex, DDX46 is part of the SF3B subcomplex, which is required for 'A' complex assembly formed by the stable binding of U2 snRNP to the branchpoint sequence in pre-mRNA. Recruited to the 17S U2 SnRNP complex following release of DDX42; DDX42 and DDX46 bind the SF3B subcomplex in a competitive manner.

Its subcellular location is the nucleus speckle. The protein localises to the nucleus. It localises to the cajal body. The enzyme catalyses ATP + H2O = ADP + phosphate + H(+). In terms of biological role, component of the 17S U2 SnRNP complex of the spliceosome, a large ribonucleoprotein complex that removes introns from transcribed pre-mRNAs. The 17S U2 SnRNP complex (1) directly participates in early spliceosome assembly and (2) mediates recognition of the intron branch site during pre-mRNA splicing by promoting the selection of the pre-mRNA branch-site adenosine, the nucleophile for the first step of splicing. Within the 17S U2 SnRNP complex, DDX46 plays essential roles during assembly of pre-spliceosome and proofreading of the branch site. The polypeptide is Probable ATP-dependent RNA helicase DDX46 (Homo sapiens (Human)).